A 338-amino-acid polypeptide reads, in one-letter code: Anthranilate phosphoribosyltransferase (338 aa).

Residues glycine 78, 81-82 (GD), threonine 86, 88-91 (NIST), 106-114 (KHGNRSVSS), and serine 118 contribute to the 5-phospho-alpha-D-ribose 1-diphosphate site. Glycine 78 is a binding site for anthranilate. Serine 90 contacts Mg(2+). Residue asparagine 109 participates in anthranilate binding. Arginine 164 is an anthranilate binding site. Mg(2+)-binding residues include aspartate 223 and glutamate 224.

Belongs to the anthranilate phosphoribosyltransferase family. Homodimer. Requires Mg(2+) as cofactor.

The catalysed reaction is N-(5-phospho-beta-D-ribosyl)anthranilate + diphosphate = 5-phospho-alpha-D-ribose 1-diphosphate + anthranilate. The protein operates within amino-acid biosynthesis; L-tryptophan biosynthesis; L-tryptophan from chorismate: step 2/5. Its function is as follows. Catalyzes the transfer of the phosphoribosyl group of 5-phosphorylribose-1-pyrophosphate (PRPP) to anthranilate to yield N-(5'-phosphoribosyl)-anthranilate (PRA). This Bacillus licheniformis (strain ATCC 14580 / DSM 13 / JCM 2505 / CCUG 7422 / NBRC 12200 / NCIMB 9375 / NCTC 10341 / NRRL NRS-1264 / Gibson 46) protein is Anthranilate phosphoribosyltransferase.